Reading from the N-terminus, the 388-residue chain is 4-hydroxycoumarin synthase 2 (388 aa).

Cysteine 159 is a catalytic residue.

This sequence belongs to the thiolase-like superfamily. Chalcone/stilbene synthases family. Homodimer.

The enzyme catalyses 2-hydroxybenzoyl-CoA + malonyl-CoA = 4-hydroxycoumarin + CO2 + 2 CoA. In terms of biological role, type III polyketide synthase involved preferentially in the biosynthesis of 4-hydroxycoumarin from salicoyl-CoA. Can also use benzoyl-CoA and malonyl-CoA to produce 3,5-dihydroxybiphenyl as a major product and benzoyldiacetic acid lactone as a minor side product. Can also use m-hydroxybenzoyl-CoA as substrate, producing m-hydroxybenzoyl diacetic acid lactone as a derailment product. No activity with p-hydroxybenzoyl-CoA, CoA-linked cinnamic acids or acetyl-CoA. This Sorbus aucuparia (European mountain ash) protein is 4-hydroxycoumarin synthase 2 (BIS3).